A 460-amino-acid polypeptide reads, in one-letter code: Elongation factor 1-alpha (460 aa).

Residue G2 is modified to N,N,N-trimethylglycine. At K3 the chain carries N6,N6-dimethyllysine; alternate. K3 is modified (N6-methyllysine; alternate). A tr-type G domain is found at 6–241 (KTHINVVVIG…DSIEPPKRPT (236 aa)). A G1 region spans residues 15 to 22 (GHVDSGKS). Position 15–22 (15–22 (GHVDSGKS)) interacts with GTP. K31 is subject to N6-methyllysine. Positions 71–75 (GITID) are G2. Position 80 is an N6,N6,N6-trimethyllysine (K80). The tract at residues 92 to 95 (DAPG) is G3. Residues 92 to 96 (DAPGH) and 154 to 157 (NKMD) each bind GTP. Positions 154 to 157 (NKMD) are G4. The interval 193 to 195 (SGF) is G5. K317 bears the N6,N6-dimethyllysine; alternate mark. K317 bears the N6-methyllysine; alternate mark. K391 carries the post-translational modification N6-methyllysine.

Belongs to the TRAFAC class translation factor GTPase superfamily. Classic translation factor GTPase family. EF-Tu/EF-1A subfamily.

Its subcellular location is the cytoplasm. Its function is as follows. This protein promotes the GTP-dependent binding of aminoacyl-tRNA to the A-site of ribosomes during protein biosynthesis. The polypeptide is Elongation factor 1-alpha (TEF) (Podospora anserina (Pleurage anserina)).